A 1057-amino-acid chain; its full sequence is Carbamoyl phosphate synthase large chain (1057 aa).

A carboxyphosphate synthetic domain region spans residues 1–401; the sequence is MPKRNDIKTI…SLLKAIRSLE (401 aa). Residues Arg129, Arg169, Gly175, Gly176, Lys208, Ile210, Glu215, Gly241, Ile242, His243, Gln284, and Glu298 each contribute to the ATP site. Residues 133–327 form the ATP-grasp 1 domain; sequence RTLMNYLNVP…IAKLAAKIAV (195 aa). Residues Gln284, Glu298, and Asn300 each coordinate Mg(2+). Mn(2+) contacts are provided by Gln284, Glu298, and Asn300. The oligomerization domain stretch occupies residues 402-546; it reads YGVHHLGLPN…YGTYETENES (145 aa). Residues 547–929 are carbamoyl phosphate synthetic domain; the sequence is IITDKEKILV…ALFKGLTGSG (383 aa). Residues 671–861 enclose the ATP-grasp 2 domain; the sequence is EALLRKINVP…MAQLAMRAII (191 aa). Residues Arg707, Arg746, Leu748, Glu752, Gly777, Val778, His779, Ser780, Gln820, and Glu832 each coordinate ATP. Mg(2+)-binding residues include Gln820, Glu832, and Asn834. Positions 820, 832, and 834 each coordinate Mn(2+). One can recognise an MGS-like domain in the interval 930–1057; it reads VEVKDHGTVL…ESMTFTMRQM (128 aa). Residues 930–1057 form an allosteric domain region; the sequence is VEVKDHGTVL…ESMTFTMRQM (128 aa).

The protein belongs to the CarB family. As to quaternary structure, composed of two chains; the small (or glutamine) chain promotes the hydrolysis of glutamine to ammonia, which is used by the large (or ammonia) chain to synthesize carbamoyl phosphate. Tetramer of heterodimers (alpha,beta)4. The cofactor is Mg(2+). Mn(2+) serves as cofactor.

It catalyses the reaction hydrogencarbonate + L-glutamine + 2 ATP + H2O = carbamoyl phosphate + L-glutamate + 2 ADP + phosphate + 2 H(+). The enzyme catalyses hydrogencarbonate + NH4(+) + 2 ATP = carbamoyl phosphate + 2 ADP + phosphate + 2 H(+). Its pathway is amino-acid biosynthesis; L-arginine biosynthesis; carbamoyl phosphate from bicarbonate: step 1/1. It functions in the pathway pyrimidine metabolism; UMP biosynthesis via de novo pathway; (S)-dihydroorotate from bicarbonate: step 1/3. Large subunit of the glutamine-dependent carbamoyl phosphate synthetase (CPSase). CPSase catalyzes the formation of carbamoyl phosphate from the ammonia moiety of glutamine, carbonate, and phosphate donated by ATP, constituting the first step of 2 biosynthetic pathways, one leading to arginine and/or urea and the other to pyrimidine nucleotides. The large subunit (synthetase) binds the substrates ammonia (free or transferred from glutamine from the small subunit), hydrogencarbonate and ATP and carries out an ATP-coupled ligase reaction, activating hydrogencarbonate by forming carboxy phosphate which reacts with ammonia to form carbamoyl phosphate. The protein is Carbamoyl phosphate synthase large chain of Staphylococcus aureus (strain bovine RF122 / ET3-1).